Here is a 158-residue protein sequence, read N- to C-terminus: NAD(P)H-quinone oxidoreductase subunit J, chloroplastic (158 aa).

Belongs to the complex I 30 kDa subunit family. In terms of assembly, NDH is composed of at least 16 different subunits, 5 of which are encoded in the nucleus.

Its subcellular location is the plastid. The protein localises to the chloroplast thylakoid membrane. The enzyme catalyses a plastoquinone + NADH + (n+1) H(+)(in) = a plastoquinol + NAD(+) + n H(+)(out). It catalyses the reaction a plastoquinone + NADPH + (n+1) H(+)(in) = a plastoquinol + NADP(+) + n H(+)(out). In terms of biological role, NDH shuttles electrons from NAD(P)H:plastoquinone, via FMN and iron-sulfur (Fe-S) centers, to quinones in the photosynthetic chain and possibly in a chloroplast respiratory chain. The immediate electron acceptor for the enzyme in this species is believed to be plastoquinone. Couples the redox reaction to proton translocation, and thus conserves the redox energy in a proton gradient. In Nicotiana tabacum (Common tobacco), this protein is NAD(P)H-quinone oxidoreductase subunit J, chloroplastic.